The sequence spans 343 residues: NADH-ubiquinone oxidoreductase chain 1 (343 aa).

8 helical membrane passes run L4 to L24, A70 to Y90, L106 to G126, F154 to S174, V177 to A197, V224 to L244, G278 to V298, and T316 to L336.

It belongs to the complex I subunit 1 family.

The protein localises to the mitochondrion inner membrane. The catalysed reaction is a ubiquinone + NADH + 5 H(+)(in) = a ubiquinol + NAD(+) + 4 H(+)(out). Functionally, core subunit of the mitochondrial membrane respiratory chain NADH dehydrogenase (Complex I) that is believed to belong to the minimal assembly required for catalysis. Complex I functions in the transfer of electrons from NADH to the respiratory chain. The immediate electron acceptor for the enzyme is believed to be ubiquinone. The polypeptide is NADH-ubiquinone oxidoreductase chain 1 (ND1) (Trichophyton rubrum (Athlete's foot fungus)).